The primary structure comprises 96 residues: MPKTQTLEQTKLSEPKMYKVILLNDDVTTMDFVIEILMNIFHQNLEKASQTMLEIHHNGSGICGIYTQEIALSKQKKVMDAAKLANFPLQAKVEEE.

The protein belongs to the ClpS family. In terms of assembly, binds to the N-terminal domain of the chaperone ClpA.

Functionally, involved in the modulation of the specificity of the ClpAP-mediated ATP-dependent protein degradation. The chain is ATP-dependent Clp protease adapter protein ClpS from Campylobacter jejuni subsp. jejuni serotype O:2 (strain ATCC 700819 / NCTC 11168).